A 470-amino-acid chain; its full sequence is Dynein axonemal assembly factor 11 (470 aa).

LRR repeat units follow at residues 20–43, 44–65, 66–89, and 90–110; these read IFSL…DKWC, RELK…VSKL, KKLE…GCES, and LQKL…NSLQ. One can recognise an LRRCT domain in the interval 128 to 146; the sequence is YEGYRQYVVATLPQLKWLD. The stretch at 177–288 forms a coiled coil; it reads LRKRAAEREK…NRSEEELKKK (112 aa). The segment at 182-265 is disordered; sequence AEREKATNNL…SQYTPESRLE (84 aa). A compositionally biased stretch (basic and acidic residues) spans 194 to 213; it reads KQKEGRKAQEKKPGFDRRWY. In terms of domain architecture, CS spans 303–395; it reads VNESKLDFSL…TEMIQTKRAK (93 aa). Positions 447–470 are disordered; that stretch reads HRNSARDTADSEDFIDNAEVPPLV.

The protein belongs to the tilB family.

The protein resides in the cytoplasm. Its subcellular location is the cell projection. It localises to the cilium. It is found in the dynein axonemal particle. The protein localises to the flagellum. Functionally, involved in dynein arm assembly, is important for expression and transporting outer dynein arm (ODA) proteins from the cytoplasm to the cilia. The protein is Dynein axonemal assembly factor 11 (dnaaf11) of Xenopus tropicalis (Western clawed frog).